Here is a 122-residue protein sequence, read N- to C-terminus: Large ribosomal subunit protein uL14c (122 aa).

It belongs to the universal ribosomal protein uL14 family. In terms of assembly, part of the 50S ribosomal subunit.

It is found in the plastid. The protein resides in the chloroplast. Its function is as follows. Binds to 23S rRNA. The polypeptide is Large ribosomal subunit protein uL14c (Coffea arabica (Arabian coffee)).